We begin with the raw amino-acid sequence, 50 residues long: Mating-type pheromone BAP1(1) (50 aa).

Residues 1-32 form a disordered region; sequence MDGEGHDINIWGARMSPSPAAAPVSATRGAPW. A compositionally biased stretch (low complexity) spans 16–26; it reads SPSPAAAPVSA. Cysteine 47 carries the cysteine methyl ester modification. Cysteine 47 is lipidated: S-farnesyl cysteine. A propeptide spans 48–50 (removed in mature form); it reads VCH.

Its subcellular location is the cell membrane. Activates B-regulated development. The protein is Mating-type pheromone BAP1(1) (BAP1(1)) of Schizophyllum commune (Split gill fungus).